The chain runs to 422 residues: Putidaredoxin reductase CamA (422 aa).

Positions 15, 37, 50, 83, and 134 each coordinate FAD. NAD(+) is bound at residue 156-165 (GGGYIGLEVA). Residues Asp-284 and Val-302 each contribute to the FAD site.

The protein belongs to the FAD-dependent oxidoreductase family. Homodimer or monomer. FAD serves as cofactor.

The catalysed reaction is 2 reduced [2Fe-2S]-[putidaredoxin] + NAD(+) + H(+) = 2 oxidized [2Fe-2S]-[putidaredoxin] + NADH. It participates in terpene metabolism; (R)-camphor degradation. The oxidation of camphor by cytochrome P450-CAM CamC requires the participation of the flavoprotein, putidaredoxin reductase CamA, and the iron-sulfur protein, putidaredoxin CamB, to mediate the transfer of electrons from NADH to P450 for oxygen activation. The polypeptide is Putidaredoxin reductase CamA (Pseudomonas putida (Arthrobacter siderocapsulatus)).